A 77-amino-acid chain; its full sequence is Kunitz-type serine protease inhibitor cvp2 (77 aa).

Positions 1–23 (MNAKIVALLIVVGFVGMFNVATA) are cleaved as a signal peptide. The region spanning 28–76 (CSLEPAVGLCKASIPRFASVGGKCQEFIYGGCGGNANNFQTQAECEAKC) is the BPTI/Kunitz inhibitor domain. Disulfide bonds link cysteine 28-cysteine 76, cysteine 37-cysteine 59, and cysteine 51-cysteine 72.

It belongs to the venom Kunitz-type family. Expressed by the venom gland.

Its subcellular location is the secreted. In terms of biological role, serine protease inhibitor. This Pimpla hypochondriaca (Parasitoid wasp) protein is Kunitz-type serine protease inhibitor cvp2.